A 1062-amino-acid polypeptide reads, in one-letter code: Suppressor of mar1-1 protein (1062 aa).

Positions M1–R17 are enriched in polar residues. Disordered stretches follow at residues M1–D27, E188–S217, T267–T337, S370–Q398, E595–G634, and S681–G804. N-acetylserine is present on S2. Over residues N189–R205 the composition is skewed to low complexity. 3 stretches are compositionally biased toward polar residues: residues T267–S279, S287–E298, and S305–I323. The segment covering I325–K335 has biased composition (basic residues). Composition is skewed to polar residues over residues S370–S385 and T610–D629. S378, S379, S628, and S681 each carry phosphoserine. Residues A685–G699 are compositionally biased toward basic and acidic residues. T697 is subject to Phosphothreonine. Positions T704–D716 are enriched in polar residues. S712 is subject to Phosphoserine; by ATM or ATR. Residue S738 is modified to Phosphoserine. The span at K781–A793 shows a compositional bias: polar residues. At T817 the chain carries Phosphothreonine.

As to quaternary structure, interacts with RFM1. This interaction is required to recruit HST1.

The protein resides in the nucleus. Functionally, DNA-binding protein that specifically binds the regulatory region of middle sporulation genes (MSE). Required for the repression of middle sporulation genes during vegetative growth. Represses expression via the recruitment of histone deacetylase HST1. This Saccharomyces cerevisiae (strain ATCC 204508 / S288c) (Baker's yeast) protein is Suppressor of mar1-1 protein (SUM1).